Reading from the N-terminus, the 258-residue chain is Imidazole glycerol phosphate synthase subunit HisF (258 aa).

Active-site residues include Asp-11 and Asp-130.

This sequence belongs to the HisA/HisF family. In terms of assembly, heterodimer of HisH and HisF.

The protein localises to the cytoplasm. It carries out the reaction 5-[(5-phospho-1-deoxy-D-ribulos-1-ylimino)methylamino]-1-(5-phospho-beta-D-ribosyl)imidazole-4-carboxamide + L-glutamine = D-erythro-1-(imidazol-4-yl)glycerol 3-phosphate + 5-amino-1-(5-phospho-beta-D-ribosyl)imidazole-4-carboxamide + L-glutamate + H(+). It participates in amino-acid biosynthesis; L-histidine biosynthesis; L-histidine from 5-phospho-alpha-D-ribose 1-diphosphate: step 5/9. Its function is as follows. IGPS catalyzes the conversion of PRFAR and glutamine to IGP, AICAR and glutamate. The HisF subunit catalyzes the cyclization activity that produces IGP and AICAR from PRFAR using the ammonia provided by the HisH subunit. The polypeptide is Imidazole glycerol phosphate synthase subunit HisF (Edwardsiella ictaluri (strain 93-146)).